A 484-amino-acid polypeptide reads, in one-letter code: Zinc metalloproteinase-disintegrin jerdonitin (484 aa).

Residues 1 to 20 (MIQVLLVTICLAVFPYQGSS) form the signal peptide. The propeptide occupies 21–191 (IILESGNIDD…KLSQIMIPPE (171 aa)). Residue glutamine 192 is modified to Pyrrolidone carboxylic acid. Residues 194-392 (RYIELVIVAD…FTSRCLYNEP (199 aa)) enclose the Peptidase M12B domain. Ca(2+) is bound by residues glutamate 197 and aspartate 281. Intrachain disulfides connect cysteine 305–cysteine 387, cysteine 345–cysteine 369, and cysteine 347–cysteine 352. Residue histidine 330 participates in Zn(2+) binding. Glutamate 331 is a catalytic residue. Residues histidine 334 and histidine 340 each coordinate Zn(2+). 7 residues coordinate Ca(2+): cysteine 387, asparagine 390, valine 402, asparagine 405, glutamate 409, glutamate 412, and aspartate 415. The Disintegrin domain maps to 400–484 (PSVCGNYYME…AGCPRNPFHA (85 aa)). Intrachain disulfides connect cysteine 403-cysteine 422, cysteine 414-cysteine 432, cysteine 416-cysteine 427, cysteine 426-cysteine 449, cysteine 440-cysteine 446, cysteine 445-cysteine 470, and cysteine 458-cysteine 477. Residues 462–464 (RGD) carry the Cell attachment site motif.

It belongs to the venom metalloproteinase (M12B) family. P-II subfamily. P-IIb sub-subfamily. In terms of assembly, monomer. Requires Zn(2+) as cofactor. The N-terminus is blocked. As to expression, expressed by the venom gland.

It localises to the secreted. Its activity is regulated as follows. Fibrinogenolytic activity is completely inhibited by EDTA, but not by PMSF. Snake venom zinc metalloproteinase that inhibits ADP-induced human platelet aggregation (IC(50)=120 nM (native) and IC(50)=248 nM (recombinant)). May act by binding to the receptor GPIIb/GPIIIa (ITGA2B/ITGB3) on the platelet surface. Degrades the alpha-chain of fibrinogen completely and the beta-chain partially, leaving the gamma chain intact. Also inhibits the growth of several cell lines, including human liver cancer cells (Bel7402), human leukemia cells (K562) and human gastric carcinoma cells (BGC823). The sequence is that of Zinc metalloproteinase-disintegrin jerdonitin from Protobothrops jerdonii (Jerdon's pitviper).